The primary structure comprises 325 residues: Glutarate 2-hydroxylase (325 aa).

Residues His160, Asp162, and His292 each coordinate Fe cation.

The protein belongs to the glutarate hydroxylase family. In terms of assembly, homotetramer. Fe(2+) is required as a cofactor.

It catalyses the reaction glutarate + 2-oxoglutarate + O2 = (S)-2-hydroxyglutarate + succinate + CO2. It functions in the pathway amino-acid degradation. Functionally, acts as an alpha-ketoglutarate-dependent dioxygenase catalyzing hydroxylation of glutarate (GA) to L-2-hydroxyglutarate (L2HG). Functions in a L-lysine degradation pathway that proceeds via cadaverine, glutarate and L-2-hydroxyglutarate. In Escherichia coli O157:H7, this protein is Glutarate 2-hydroxylase.